The sequence spans 352 residues: Anthranilate phosphoribosyltransferase (352 aa).

5-phospho-alpha-D-ribose 1-diphosphate contacts are provided by residues G82, 85-86, S90, 92-95, 110-118, and G122; these read GD, NIST, and KHGNRAVTG. G82 is a binding site for anthranilate. Residue S94 participates in Mg(2+) binding. N113 provides a ligand contact to anthranilate. R168 provides a ligand contact to anthranilate. Mg(2+) is bound by residues D232 and E233.

It belongs to the anthranilate phosphoribosyltransferase family. Homodimer. It depends on Mg(2+) as a cofactor.

It catalyses the reaction N-(5-phospho-beta-D-ribosyl)anthranilate + diphosphate = 5-phospho-alpha-D-ribose 1-diphosphate + anthranilate. The protein operates within amino-acid biosynthesis; L-tryptophan biosynthesis; L-tryptophan from chorismate: step 2/5. Functionally, catalyzes the transfer of the phosphoribosyl group of 5-phosphorylribose-1-pyrophosphate (PRPP) to anthranilate to yield N-(5'-phosphoribosyl)-anthranilate (PRA). In Methanothermobacter thermautotrophicus (strain ATCC 29096 / DSM 1053 / JCM 10044 / NBRC 100330 / Delta H) (Methanobacterium thermoautotrophicum), this protein is Anthranilate phosphoribosyltransferase.